Consider the following 407-residue polypeptide: Imidazolonepropionase (407 aa).

Fe(3+) contacts are provided by His-75 and His-77. Zn(2+)-binding residues include His-75 and His-77. 4-imidazolone-5-propanoate contacts are provided by Arg-84, Tyr-147, and His-180. Tyr-147 is an N-formimidoyl-L-glutamate binding site. His-245 is a Fe(3+) binding site. Position 245 (His-245) interacts with Zn(2+). A 4-imidazolone-5-propanoate-binding site is contributed by Gln-248. Asp-320 is a binding site for Fe(3+). Asp-320 is a Zn(2+) binding site. N-formimidoyl-L-glutamate contacts are provided by Asn-322 and Gly-324. Ser-325 is a binding site for 4-imidazolone-5-propanoate.

Belongs to the metallo-dependent hydrolases superfamily. HutI family. Zn(2+) serves as cofactor. The cofactor is Fe(3+).

It is found in the cytoplasm. The catalysed reaction is 4-imidazolone-5-propanoate + H2O = N-formimidoyl-L-glutamate. The protein operates within amino-acid degradation; L-histidine degradation into L-glutamate; N-formimidoyl-L-glutamate from L-histidine: step 3/3. Its function is as follows. Catalyzes the hydrolytic cleavage of the carbon-nitrogen bond in imidazolone-5-propanoate to yield N-formimidoyl-L-glutamate. It is the third step in the universal histidine degradation pathway. The sequence is that of Imidazolonepropionase from Pseudoalteromonas atlantica (strain T6c / ATCC BAA-1087).